A 1163-amino-acid chain; its full sequence is MICQKFCVVLLHWEFICVITAFNLSYPITPWRFKLSCMPPNSTYDYFLLPAGLSKNTSNLNGHYETAVEFNSSDTHFSNLSKTTFHCCFRSEQDRNCSLCADNIEGKTFVSTVNSSVFQQMGANWNIQCWLKGDLKLFICYVESLFKNPFKNYKHKVHLLYVLPEVLEDSPLVPQKGSFQMVHCNCSVHERCECLVPVPTAKLNDTLLMCLKITSGGVIFQSPLMSVQPINMVKPDPPLGLRMEITDDGNLKISWSSPPLVPFPLQYEVKYSENSTTVIREADKIVSATSLLVDGILPGSSYEVQVRGKRLDGPGIWSDWSTPHVFTTQDVIYFPPKILTSVGSNVSFHCIYKNENKIVSSKKIVWWMNLAEKIPQSQYDVVSDHVSKVTFFNLNETKPRGKFTYDAVYCCNEHECHHRYAELYVIDVNINISCETDGHLTKMTCRWSTNTIQSLAGSTLQLRYRRSSLYCFDIPSIHPISKPKDCYLQSDGFYECVFQPIFLLSGYTMWIRINHPLGSLDSPPTCVLPDSVVKPLPPSSVKAEIIKNIGLLKISWEKPVFPENNLQFQIRYGLSGKEIQWKMYDVYDAKSKSVSLPVPDFCAVYAVQVRCKRSDGLGLWSNWSNPAYTVVMDIKVPMRGPEFWRIINGDTMKKEKNVTLLWKPLMKNESLCSVQRYVINHHTSCNGTWSEDVGNHTKFTFLWTEQAHTVTVLAINSIGASVANFNLTFSWPMSKVNIVQSLSAYPLNSSCVILSWILSPSDYKLMYFIIEWKNLNEDGEIKWLRISSSVKKYYIHDHFIPIEKYQFSLYPIFMEGVGKPKIINSFAQDNTEKHQNDAGLYVIVPVIISSSILLLGTLLILHQRMKKLFWEDVPNPKNCSWAQGLNFQKPETFEHLFIKHTASVTCGPLLLEPETISEDISVDTSWKNKDEMVPTTVVSLLSTTDLEKGSVCISDQFNSVNFSEAEGTEVTCEDESQRQPFVKYATLISNSKPSETDEEQGLINSSVTKCFSSKNSPLKDSFSNSSWEIEAQAFFILSDQRPNIILPHLTFSEGLDELLRLEGNFPEENNDEKSIYYLGVTSIKKRESGVLLTDKSRVLCPFPAPCLFTDIRVLQDSCSHFVENNFNLGTSSKKTFASYMPQFQTCSTQTHKIMENKMCDLTV.

Residues 1–21 (MICQKFCVVLLHWEFICVITA) form the signal peptide. The Extracellular segment spans residues 22-837 (FNLSYPITPW…QDNTEKHQND (816 aa)). N-linked (GlcNAc...) asparagine glycans are attached at residues asparagine 23, asparagine 41, asparagine 56, asparagine 71, asparagine 79, asparagine 96, and asparagine 114. 2 disulfide bridges follow: cysteine 37/cysteine 88 and cysteine 87/cysteine 97. Intrachain disulfides connect cysteine 129–cysteine 140 and cysteine 184–cysteine 194. 5 N-linked (GlcNAc...) asparagine glycosylation sites follow: asparagine 185, asparagine 204, asparagine 274, asparagine 345, and asparagine 395. Residues 237–331 (PPLGLRMEIT…TPHVFTTQDV (95 aa)) form the Fibronectin type-III 1 domain. Cystine bridges form between cysteine 350–cysteine 410 and cysteine 411–cysteine 416. Asparagine 431 is a glycosylation site (N-linked (GlcNAc...) asparagine). Disulfide bonds link cysteine 434–cysteine 445, cysteine 471–cysteine 526, and cysteine 486–cysteine 496. The tract at residues 465–482 (RRSSLYCFDIPSIHPISK) is leptin-binding. 3 Fibronectin type-III domains span residues 537-632 (PPSS…TVVM), 637-730 (PMRG…LTFS), and 738-831 (IVQS…QDNT). The short motif at 620 to 624 (WSNWS) is the WSXWS motif element. 7 N-linked (GlcNAc...) asparagine glycosylation sites follow: asparagine 622, asparagine 657, asparagine 668, asparagine 686, asparagine 695, asparagine 726, and asparagine 748. Residues 838–860 (AGLYVIVPVIISSSILLLGTLLI) traverse the membrane as a helical segment. At 861–1163 (LHQRMKKLFW…MENKMCDLTV (303 aa)) the chain is on the cytoplasmic side. Residues 869-877 (FWEDVPNPK) carry the Box 1 motif motif. Serine 880 carries the phosphoserine modification. The interval 891 to 896 (ETFEHL) is required for JAK2 activation. Residues 896 to 904 (LFIKHTASV) form a required for STAT3 phosphorylation region. The residue at position 984 (tyrosine 984) is a Phosphotyrosine; by JAK2. The residue at position 1077 (tyrosine 1077) is a Phosphotyrosine. At tyrosine 1139 the chain carries Phosphotyrosine; by JAK2.

This sequence belongs to the type I cytokine receptor family. Type 2 subfamily. Present as a mixture of monomers and dimers. The phosphorylated receptor binds a number of SH2 domain-containing proteins such as JAK2, STAT3, PTPN11, and SOCS3. Interaction with SOCS3 inhibits JAK/STAT signaling and MAPK cascade. Post-translationally, on ligand binding, phosphorylated on two conserved C-terminal tyrosine residues (isoform B only) by JAK2. Tyr-984 is required for complete binding and activation of PTPN11, ERK/FOS activation and, for interaction with SOCS3. Phosphorylation on Tyr-1139 is required for STAT3 binding/activation. In terms of processing, on ligand binding, phosphorylated on two conserved C-terminal tyrosine residues (isoform B only) by JAK2. Tyr-984 is required for complete binding and activation of PTPN11, ERK/FOS activation,for interaction with SOCS3 and SOCS3 mediated inhibition of leptin signaling. Phosphorylation on Tyr-1139 is required for STAT3 binding/activation. Phosphorylation of Tyr-1077 has a more accessory role. Widely expressed. High expression of isoform B in liver, adipose tissue, hypothalamus and choroid plexus.

The protein localises to the cell membrane. Its subcellular location is the basolateral cell membrane. Receptor for hormone LEP/leptin. On ligand binding, mediates LEP central and peripheral effects through the activation of different signaling pathways such as JAK2/STAT3 and MAPK cascade/FOS. In the hypothalamus, LEP acts as an appetite-regulating factor that induces a decrease in food intake and an increase in energy consumption by inducing anorexinogenic factors and suppressing orexigenic neuropeptides, also regulates bone mass and secretion of hypothalamo-pituitary-adrenal hormones. In the periphery, increases basal metabolism, influences reproductive function, regulates pancreatic beta-cell function and insulin secretion, is pro-angiogenic and affects innate and adaptive immunity. Control of energy homeostasis and melanocortin production (stimulation of POMC and full repression of AgRP transcription) is mediated by STAT3 signaling, whereas distinct signals regulate NPY and the control of fertility, growth and glucose homeostasis. Involved in the regulation of counter-regulatory response to hypoglycemia by inhibiting neurons of the parabrachial nucleus. Has a specific effect on T lymphocyte responses, differentially regulating the proliferation of naive and memory T-cells. Leptin increases Th1 and suppresses Th2 cytokine production. Functionally, may transport LEP across the blood-brain barrier. Binds LEP and mediates LEP endocytosis. Does not induce phosphorylation of and activate STAT3. In Macaca mulatta (Rhesus macaque), this protein is Leptin receptor (LEPR).